We begin with the raw amino-acid sequence, 196 residues long: ATP-dependent Clp protease proteolytic subunit (196 aa).

Residue Ser98 is the Nucleophile of the active site. Residue His123 is part of the active site.

The protein belongs to the peptidase S14 family. Fourteen ClpP subunits assemble into 2 heptameric rings which stack back to back to give a disk-like structure with a central cavity, resembling the structure of eukaryotic proteasomes.

The protein resides in the cytoplasm. The enzyme catalyses Hydrolysis of proteins to small peptides in the presence of ATP and magnesium. alpha-casein is the usual test substrate. In the absence of ATP, only oligopeptides shorter than five residues are hydrolyzed (such as succinyl-Leu-Tyr-|-NHMec, and Leu-Tyr-Leu-|-Tyr-Trp, in which cleavage of the -Tyr-|-Leu- and -Tyr-|-Trp bonds also occurs).. In terms of biological role, cleaves peptides in various proteins in a process that requires ATP hydrolysis. Has a chymotrypsin-like activity. Plays a major role in the degradation of misfolded proteins. This is ATP-dependent Clp protease proteolytic subunit from Sulfurimonas denitrificans (strain ATCC 33889 / DSM 1251) (Thiomicrospira denitrificans (strain ATCC 33889 / DSM 1251)).